An 87-amino-acid polypeptide reads, in one-letter code: Co-chaperonin GroES (87 aa).

It belongs to the GroES chaperonin family. In terms of assembly, heptamer of 7 subunits arranged in a ring. Interacts with the chaperonin GroEL.

The protein localises to the cytoplasm. Functionally, together with the chaperonin GroEL, plays an essential role in assisting protein folding. The GroEL-GroES system forms a nano-cage that allows encapsulation of the non-native substrate proteins and provides a physical environment optimized to promote and accelerate protein folding. GroES binds to the apical surface of the GroEL ring, thereby capping the opening of the GroEL channel. The protein is Co-chaperonin GroES of Campylobacter hominis (strain ATCC BAA-381 / DSM 21671 / CCUG 45161 / LMG 19568 / NCTC 13146 / CH001A).